We begin with the raw amino-acid sequence, 663 residues long: UvrABC system protein B (663 aa).

Positions 26 to 414 constitute a Helicase ATP-binding domain; the sequence is DGLESGLAKQ…DNVAEQVVRP (389 aa). An ATP-binding site is contributed by 39–46; it reads GVTGSGKT. Positions 92–115 match the Beta-hairpin motif; it reads YYDYYQPEAYVPASDTFIEKDASI. The 167-residue stretch at 430–596 folds into the Helicase C-terminal domain; the sequence is QVDDLMSEIR…GINKSVEDIL (167 aa). The UVR domain maps to 624–659; sequence AKEINALEKQMYAHAQNMEFELAAKIRDEYLLLKEQ.

The protein belongs to the UvrB family. As to quaternary structure, forms a heterotetramer with UvrA during the search for lesions. Interacts with UvrC in an incision complex.

Its subcellular location is the cytoplasm. In terms of biological role, the UvrABC repair system catalyzes the recognition and processing of DNA lesions. A damage recognition complex composed of 2 UvrA and 2 UvrB subunits scans DNA for abnormalities. Upon binding of the UvrA(2)B(2) complex to a putative damaged site, the DNA wraps around one UvrB monomer. DNA wrap is dependent on ATP binding by UvrB and probably causes local melting of the DNA helix, facilitating insertion of UvrB beta-hairpin between the DNA strands. Then UvrB probes one DNA strand for the presence of a lesion. If a lesion is found the UvrA subunits dissociate and the UvrB-DNA preincision complex is formed. This complex is subsequently bound by UvrC and the second UvrB is released. If no lesion is found, the DNA wraps around the other UvrB subunit that will check the other stand for damage. This is UvrABC system protein B from Legionella pneumophila (strain Paris).